The following is a 337-amino-acid chain: Dehydrogenase FUB6 (337 aa).

This sequence belongs to the zinc-containing alcohol dehydrogenase family. Quinone oxidoreductase subfamily.

The protein operates within mycotoxin biosynthesis. Functionally, dehydrogenase; part of the gene cluster that mediates the biosynthesis of fusaric acid, a mycotoxin with low to moderate toxicity to animals and humans, but with high phytotoxic properties. L-aspartate is suggested as fusaric acid amino acid precursor that is activated and further processed to O-acetyl-L-homoserine by cluster enzymes aspartate kinase FUB3 and homoserine O-acetyltransferase FUB5, as well as enzymes of the primary metabolism. The polyketide synthase (PKS) FUB1 generates the triketide trans-2-hexenal which is presumptively released by the hydrolase FUB4 and linked to the NRPS-bound amino acid precursor by NAD(P)-dependent dehydrogenase FUB6. FUB1, FUB4, and the non-canonical NRPS Fub8 may form an enzyme complex. Further processing of the NRPS-bound intermediate might be carried out by FUB6 and the O-acetylhomoserine FUB7, enabling a spontaneous electrocyclization to close the carbon backbone of fusaric acid. Dihydrofusaric acid is likely to be released via reduction by the thioester reductase (TR) domain of FUB8 whereupon the final oxidation to fusaric acid may (also) be performed by the FMN-dependent dehydrogenase FUB9. The sequence is that of Dehydrogenase FUB6 from Gibberella fujikuroi (strain CBS 195.34 / IMI 58289 / NRRL A-6831) (Bakanae and foot rot disease fungus).